The following is a 487-amino-acid chain: Probable UDP-N-acetylglucosamine pyrophosphorylase (487 aa).

Residues 105 to 108 carry the Substrate binding motif; it reads LAGG. Residues 105–108, lysine 119, glutamine 198, and glycine 225 contribute to the UTP site; that span reads LAGG. Asparagine 226 contacts substrate. Aspartate 256 is a binding site for UTP. The Substrate binding motif lies at 307-308; sequence EY. Position 382 (lysine 382) interacts with UTP. Lysine 412 contacts substrate.

Belongs to the UDPGP type 1 family.

The protein resides in the cytoplasm. It catalyses the reaction N-acetyl-alpha-D-glucosamine 1-phosphate + UTP + H(+) = UDP-N-acetyl-alpha-D-glucosamine + diphosphate. It functions in the pathway nucleotide-sugar biosynthesis; UDP-N-acetyl-alpha-D-glucosamine biosynthesis; UDP-N-acetyl-alpha-D-glucosamine from N-acetyl-alpha-D-glucosamine 1-phosphate: step 1/1. In Dictyostelium discoideum (Social amoeba), this protein is Probable UDP-N-acetylglucosamine pyrophosphorylase (uap1).